The chain runs to 445 residues: Glutamate--tRNA ligase 2 (445 aa).

The 'HIGH' region motif lies at 10 to 20 (PSPTGRLHVGN). Positions 241 to 245 (ALSKR) match the 'KMSKS' region motif. Position 244 (Lys-244) interacts with ATP.

The protein belongs to the class-I aminoacyl-tRNA synthetase family. Glutamate--tRNA ligase type 1 subfamily. In terms of assembly, monomer.

It is found in the cytoplasm. It catalyses the reaction tRNA(Glu) + L-glutamate + ATP = L-glutamyl-tRNA(Glu) + AMP + diphosphate. Functionally, catalyzes the attachment of glutamate to tRNA(Glu) in a two-step reaction: glutamate is first activated by ATP to form Glu-AMP and then transferred to the acceptor end of tRNA(Glu). The chain is Glutamate--tRNA ligase 2 from Hyphomonas neptunium (strain ATCC 15444).